The primary structure comprises 156 residues: MPRRRSIEPRKILPDPKFGSELLAKFINVLMVDGKKSIAESIVYNALDTLAQRTNKDALVAFEEALENVRPTVEVKSRRVGGSTYQVPVEVRPARRNALGMRWIVEAARKRGDKSMALRLANELSDASENKGSAVKKREDVHRMAEANKAFAHYRW.

Belongs to the universal ribosomal protein uS7 family. Part of the 30S ribosomal subunit. Contacts proteins S9 and S11.

Its function is as follows. One of the primary rRNA binding proteins, it binds directly to 16S rRNA where it nucleates assembly of the head domain of the 30S subunit. Is located at the subunit interface close to the decoding center, probably blocks exit of the E-site tRNA. This chain is Small ribosomal subunit protein uS7, found in Mannheimia succiniciproducens (strain KCTC 0769BP / MBEL55E).